The sequence spans 41 residues: Photosystem I reaction center subunit IX (41 aa).

A helical membrane pass occupies residues 7–27; that stretch reads YLSTVPVVFAIWLTFTAGLII.

It belongs to the PsaJ family.

The protein localises to the plastid. Its subcellular location is the chloroplast thylakoid membrane. May help in the organization of the PsaE and PsaF subunits. This Bigelowiella natans (Pedinomonas minutissima) protein is Photosystem I reaction center subunit IX.